The sequence spans 336 residues: Fructose-1,6-bisphosphatase class 1 (336 aa).

Mg(2+) contacts are provided by E92, D115, L117, and D118. Substrate is bound by residues 118-121 (DGSS), N211, Y244, 262-264 (YLY), and K274. E280 provides a ligand contact to Mg(2+).

This sequence belongs to the FBPase class 1 family. In terms of assembly, homotetramer. Mg(2+) serves as cofactor.

The protein localises to the cytoplasm. The enzyme catalyses beta-D-fructose 1,6-bisphosphate + H2O = beta-D-fructose 6-phosphate + phosphate. The protein operates within carbohydrate biosynthesis; gluconeogenesis. The protein is Fructose-1,6-bisphosphatase class 1 of Vibrio cholerae serotype O1 (strain ATCC 39315 / El Tor Inaba N16961).